The chain runs to 316 residues: DMOA farnesyltransferase nvfB (316 aa).

The next 9 helical transmembrane spans lie at 47–67 (VVGV…TILL), 71–91 (LILV…NDVI), 115–135 (WNAV…LSFL), 139–159 (CAIE…GKRF), 162–182 (FPQL…HSLG), 191–211 (PTFF…VVYS), 234–254 (IELL…AAGY), 258–278 (LGIP…LYFL), and 294–314 (KLAC…EYYL).

It belongs to the UbiA prenyltransferase family.

Its subcellular location is the membrane. The enzyme catalyses 3,5-dimethylorsellinate + (2E,6E)-farnesyl diphosphate = (3R)-3-farnesyl-6-hydroxy-2,3,5-trimethyl-4-oxocyclohexa-1,5-diene-1-carboxylate + diphosphate + H(+). Its pathway is secondary metabolite biosynthesis; terpenoid biosynthesis. In terms of biological role, DMOA farnesyltransferase; part of the gene cluster that mediates the biosynthesis of novofumigatonin, a heavily oxygenated meroterpenoid containing a unique orthoester moiety. The first step of the pathway is the synthesis of 3,5-dimethylorsellinic acid (DMOA) by the polyketide synthase nvfA via condensation of one acetyl-CoA starter unit with 3 malonyl-CoA units and 2 methylations. DMOA is then converted to farnesyl-DMOA by the farnesyltransferase nvfB. Epoxydation by FAD-dependent monooxygenase nvfK, followed by a protonation-initiated cyclization catalyzed by the terpene cyclase nvfL leads to the production of asnavolin H. The short chain dehydrogenase nvfC then as a 3-OH dehydrogenase of asnovolin H to yield chemesin D. There are two branches to synthesize asnovolin A from chemesin D. In one branch, chemesin D undergoes Baeyer-Villiger oxidation by nvfH, methylation by nvfJ, and enoyl reduction by the nvfM D enoylreductase that reduces the double bond between C-5'and C-6', to form respectively asnovolin I, asnovolin K, and asnovolin A. In the other branch, the methylation precedes the Baeyer-Villiger oxidation and the enoyl reduction to yield asnovolin A via the asnovolin J intermediate. Asnovolin A is further converted to fumigatonoid A by the Fe(II)/2-oxoglutarate-dependent dioxygenase nvfI that catalyzes an endoperoxidation reaction. The alpha/beta hydrolase nvfD then acts as an epimerase that converts fumigatonoid A to its C-5' epimer, which then undergoes spontaneous or nvfD-catalyzed lactonization. The following step utilizes the ketoreductase nvfG to produce fumigatonoid B. The dioxygenase nvfE further converts fumigatonoid B into fumigatonoid C. Finally the Fe(II)/2-oxoglutarate-dependent dioxygenase nvfF catalyzes two rounds of oxidation to transform fumigatonoid C into the end product, novofumigatonin A. The protein is DMOA farnesyltransferase nvfB of Aspergillus novofumigatus (strain IBT 16806).